The chain runs to 316 residues: Transaldolase 2 (316 aa).

The Schiff-base intermediate with substrate role is filled by lysine 131.

It belongs to the transaldolase family. Type 1 subfamily. In terms of assembly, homodimer.

It localises to the cytoplasm. The catalysed reaction is D-sedoheptulose 7-phosphate + D-glyceraldehyde 3-phosphate = D-erythrose 4-phosphate + beta-D-fructose 6-phosphate. The protein operates within carbohydrate degradation; pentose phosphate pathway; D-glyceraldehyde 3-phosphate and beta-D-fructose 6-phosphate from D-ribose 5-phosphate and D-xylulose 5-phosphate (non-oxidative stage): step 2/3. Functionally, transaldolase is important for the balance of metabolites in the pentose-phosphate pathway. The sequence is that of Transaldolase 2 from Salmonella paratyphi A (strain ATCC 9150 / SARB42).